The sequence spans 531 residues: Probable cytochrome P450 4e1 (531 aa).

Glu307 and Cys444 together coordinate heme.

Belongs to the cytochrome P450 family. Heme serves as cofactor.

It localises to the endoplasmic reticulum membrane. The protein resides in the microsome membrane. Its function is as follows. May be involved in the metabolism of insect hormones and in the breakdown of synthetic insecticides. The sequence is that of Probable cytochrome P450 4e1 (Cyp4e1) from Drosophila melanogaster (Fruit fly).